The primary structure comprises 283 residues: Putative ABC transporter ATP-binding protein MA_4342 (283 aa).

Residues 3 to 238 (IILENVSFFY…KNVPLPPVTS (236 aa)) enclose the ABC transporter domain. 40–47 (GEKGAGKS) is a binding site for ATP.

The protein belongs to the ABC transporter superfamily.

It localises to the cell membrane. In terms of biological role, probably part of an ABC transporter complex. Responsible for energy coupling to the transport system. The protein is Putative ABC transporter ATP-binding protein MA_4342 of Methanosarcina acetivorans (strain ATCC 35395 / DSM 2834 / JCM 12185 / C2A).